Reading from the N-terminus, the 200-residue chain is Cysteine dioxygenase type 1 (200 aa).

The Fe cation site is built by H86, H88, and H140. The 3'-(S-cysteinyl)-tyrosine (Cys-Tyr) cross-link spans 93-157; that stretch reads CFLKMLQGNL…TEPAVSLHLY (65 aa).

The protein belongs to the cysteine dioxygenase family. In terms of assembly, monomer. Fe(2+) is required as a cofactor. The cofactor is Ni(2+). Zn(2+) serves as cofactor. The thioether cross-link between Cys-93 and Tyr-157 plays a structural role through stabilizing the Fe(2+) ion, and prevents the production of highly damaging free hydroxyl radicals by holding the oxygen radical via hydroxyl hydrogen. As to expression, highly expressed in liver and placenta. Low expression in heart, brain and pancreas. Also detected in hepatoblastoma Hep-G2 cells.

The enzyme catalyses L-cysteine + O2 = 3-sulfino-L-alanine + H(+). It functions in the pathway organosulfur biosynthesis; taurine biosynthesis; hypotaurine from L-cysteine: step 1/2. In terms of biological role, catalyzes the oxidation of cysteine to cysteine sulfinic acid with addition of molecular dioxygen. The polypeptide is Cysteine dioxygenase type 1 (CDO1) (Homo sapiens (Human)).